Here is a 141-residue protein sequence, read N- to C-terminus: Hemoglobin subunit alpha (141 aa).

Residues 1–141 (VLSANDKTNV…VSTVLTSKYR (141 aa)) form the Globin domain. At serine 3 the chain carries Phosphoserine. At lysine 7 the chain carries N6-succinyllysine. At threonine 8 the chain carries Phosphothreonine. At lysine 11 the chain carries N6-succinyllysine. Position 16 is an N6-acetyllysine; alternate (lysine 16). An N6-succinyllysine; alternate modification is found at lysine 16. A Phosphotyrosine modification is found at tyrosine 24. Serine 35 is modified (phosphoserine). N6-succinyllysine is present on lysine 40. Residue serine 49 is modified to Phosphoserine. Glutamine 58 contributes to the O2 binding site. Residue histidine 87 coordinates heme b. Threonine 108 is subject to Phosphothreonine. Serine 124 and serine 131 each carry phosphoserine. Threonine 134 and threonine 137 each carry phosphothreonine. Position 138 is a phosphoserine (serine 138).

It belongs to the globin family. In terms of assembly, heterotetramer of two alpha chains and two beta chains. As to expression, red blood cells.

In terms of biological role, involved in oxygen transport from the lung to the various peripheral tissues. Its function is as follows. Hemopressin acts as an antagonist peptide of the cannabinoid receptor CNR1. Hemopressin-binding efficiently blocks cannabinoid receptor CNR1 and subsequent signaling. The chain is Hemoglobin subunit alpha (HBA) from Didelphis virginiana (North American opossum).